The chain runs to 469 residues: Argininosuccinate lyase (469 aa).

This sequence belongs to the lyase 1 family. Argininosuccinate lyase subfamily.

It localises to the cytoplasm. It carries out the reaction 2-(N(omega)-L-arginino)succinate = fumarate + L-arginine. It participates in amino-acid biosynthesis; L-arginine biosynthesis; L-arginine from L-ornithine and carbamoyl phosphate: step 3/3. This is Argininosuccinate lyase from Burkholderia lata (strain ATCC 17760 / DSM 23089 / LMG 22485 / NCIMB 9086 / R18194 / 383).